A 257-amino-acid chain; its full sequence is Deoxyribose-phosphate aldolase (257 aa).

The Proton donor/acceptor role is filled by D102. K166 (schiff-base intermediate with acetaldehyde) is an active-site residue. Residue K198 is the Proton donor/acceptor of the active site.

The protein belongs to the DeoC/FbaB aldolase family. DeoC type 2 subfamily.

The protein resides in the cytoplasm. The catalysed reaction is 2-deoxy-D-ribose 5-phosphate = D-glyceraldehyde 3-phosphate + acetaldehyde. The protein operates within carbohydrate degradation; 2-deoxy-D-ribose 1-phosphate degradation; D-glyceraldehyde 3-phosphate and acetaldehyde from 2-deoxy-alpha-D-ribose 1-phosphate: step 2/2. Functionally, catalyzes a reversible aldol reaction between acetaldehyde and D-glyceraldehyde 3-phosphate to generate 2-deoxy-D-ribose 5-phosphate. The chain is Deoxyribose-phosphate aldolase from Aeromonas hydrophila subsp. hydrophila (strain ATCC 7966 / DSM 30187 / BCRC 13018 / CCUG 14551 / JCM 1027 / KCTC 2358 / NCIMB 9240 / NCTC 8049).